A 216-amino-acid polypeptide reads, in one-letter code: RNA pyrophosphohydrolase (216 aa).

The Nudix hydrolase domain maps to 6–149 (GFRPNVGIIL…KRDVYQLALT (144 aa)). Residues 38 to 59 (GGIKYGETPMQAMYRELHEETG) carry the Nudix box motif. Residues 159-191 (AQRTDKSRGPRAPRYPRVANGHAASETPAAIDT) form a disordered region.

Belongs to the Nudix hydrolase family. RppH subfamily. A divalent metal cation is required as a cofactor.

Accelerates the degradation of transcripts by removing pyrophosphate from the 5'-end of triphosphorylated RNA, leading to a more labile monophosphorylated state that can stimulate subsequent ribonuclease cleavage. The sequence is that of RNA pyrophosphohydrolase from Burkholderia pseudomallei (strain 668).